A 91-amino-acid polypeptide reads, in one-letter code: Long neurotoxin OH-57 (91 aa).

An N-terminal signal peptide occupies residues 1–21 (MKTLLLTLVVVTIVCLDLGYT). 5 cysteine pairs are disulfide-bonded: Cys24–Cys41, Cys34–Cys62, Cys47–Cys51, Cys66–Cys77, and Cys78–Cys83.

It belongs to the three-finger toxin family. Long-chain subfamily. Type II alpha-neurotoxin sub-subfamily. Expressed by the venom gland.

The protein localises to the secreted. Its function is as follows. Binds with high affinity to muscular (alpha-1/CHRNA1) and neuronal (alpha-7/CHRNA7) nicotinic acetylcholine receptor (nAChR) and inhibits acetylcholine from binding to the receptor, thereby impairing neuromuscular and neuronal transmission. In Ophiophagus hannah (King cobra), this protein is Long neurotoxin OH-57.